Here is a 484-residue protein sequence, read N- to C-terminus: Protein nucleotidyltransferase YdiU (484 aa).

Residues G81, G83, R84, K103, D115, G116, R166, and R173 each contribute to the ATP site. D244 (proton acceptor) is an active-site residue. Residues N245 and D254 each contribute to the Mg(2+) site. Residue D254 coordinates ATP.

Belongs to the SELO family. Requires Mg(2+) as cofactor. The cofactor is Mn(2+).

It catalyses the reaction L-seryl-[protein] + ATP = 3-O-(5'-adenylyl)-L-seryl-[protein] + diphosphate. The catalysed reaction is L-threonyl-[protein] + ATP = 3-O-(5'-adenylyl)-L-threonyl-[protein] + diphosphate. The enzyme catalyses L-tyrosyl-[protein] + ATP = O-(5'-adenylyl)-L-tyrosyl-[protein] + diphosphate. It carries out the reaction L-histidyl-[protein] + UTP = N(tele)-(5'-uridylyl)-L-histidyl-[protein] + diphosphate. It catalyses the reaction L-seryl-[protein] + UTP = O-(5'-uridylyl)-L-seryl-[protein] + diphosphate. The catalysed reaction is L-tyrosyl-[protein] + UTP = O-(5'-uridylyl)-L-tyrosyl-[protein] + diphosphate. Nucleotidyltransferase involved in the post-translational modification of proteins. It can catalyze the addition of adenosine monophosphate (AMP) or uridine monophosphate (UMP) to a protein, resulting in modifications known as AMPylation and UMPylation. The chain is Protein nucleotidyltransferase YdiU from Shewanella baltica (strain OS223).